We begin with the raw amino-acid sequence, 399 residues long: 3-dehydroquinate synthase (399 aa).

Belongs to the archaeal-type DHQ synthase family.

It catalyses the reaction 2-amino-2,3,7-trideoxy-D-lyxo-hept-6-ulosonate + NAD(+) + H2O = 3-dehydroquinate + NH4(+) + NADH + H(+). Catalyzes the oxidative deamination and cyclization of 2-amino-3,7-dideoxy-D-threo-hept-6-ulosonic acid (ADH) to yield 3-dehydroquinate (DHQ), which is fed into the canonical shikimic pathway of aromatic amino acid biosynthesis. In Haloquadratum walsbyi (strain DSM 16790 / HBSQ001), this protein is 3-dehydroquinate synthase.